The sequence spans 64 residues: Kappa-lycotoxin-Os1a (64 aa).

4 cysteine pairs are disulfide-bonded: cysteine 10–cysteine 26, cysteine 17–cysteine 56, cysteine 19–cysteine 42, and cysteine 28–cysteine 40.

The protein belongs to the neurotoxin 04 (omega-agtx) family. 01 (type I omega-agtx) subfamily. In terms of tissue distribution, expressed by the venom gland.

It is found in the secreted. In terms of biological role, insecticidal to house crickets. It induces an excitatory slow-onset impact that leads to irreversible spastic paralysis. It also modifies human voltage-gated potassium channel Kv1.5/KCNA5. Most likely, it binds to the voltage-sensing domain of the channel, suggesting it does not block the pore but prevents its opening at physiological membrane potentials. The recombinant peptide binds to the channel in an irreversible manner and slows down the hKv1.5 current activation kinetics. It is not toxic to mice, when intracranially injected (at 0.5 ug/g mouse). This chain is Kappa-lycotoxin-Os1a, found in Oculicosa supermirabilis (Central Asian wolf-spider).